A 79-amino-acid chain; its full sequence is Small ribosomal subunit protein bS16c (79 aa).

Belongs to the bacterial ribosomal protein bS16 family.

It localises to the plastid. The protein resides in the chloroplast. This chain is Small ribosomal subunit protein bS16c, found in Trieres chinensis (Marine centric diatom).